A 144-amino-acid polypeptide reads, in one-letter code: (R)-specific enoyl-CoA hydratase (144 aa).

The region spanning 13–128 (DIKEGQSASL…TFRTTCTVAG (116 aa)) is the MaoC-like domain.

In terms of assembly, homotetramer.

The catalysed reaction is a (3R)-3-hydroxyacyl-CoA = a (2E)-enoyl-CoA + H2O. Its function is as follows. Catalyzes the hydration of trans-2-enoyl-CoAs with a chain-length of 4-6 carbon atoms, forming the corresponding (3R)-3-hydroxyacyl-CoAs, which can then be utilized for the production of polyhydroxyalkanoates (PHA) polymers. Cannot use trans-2,3-octenoyl-CoA as substrate. This chain is (R)-specific enoyl-CoA hydratase, found in Rhodospirillum rubrum (strain ATCC 11170 / ATH 1.1.1 / DSM 467 / LMG 4362 / NCIMB 8255 / S1).